The chain runs to 186 residues: uncharacterized protein (186 aa).

Residues 1 to 28 form the signal peptide; sequence MSVKPAALFRISAALAVAGLGASLIASA.

This is an uncharacterized protein from Rhizobium meliloti (strain 1021) (Ensifer meliloti).